The following is a 182-amino-acid chain: Lipoprotein signal peptidase (182 aa).

4 helical membrane-spanning segments follow: residues 15-35, 44-64, 65-85, and 97-117; these read LYIG…FLVI, LEVL…FVFG, AFQD…VFLI, and PWGW…KFFV. Residues Asp140 and Asp162 contribute to the active site. A helical membrane pass occupies residues 155–175; it reads WPAFNVADSCVTIGLTILIFT.

Belongs to the peptidase A8 family.

It is found in the cell inner membrane. It carries out the reaction Release of signal peptides from bacterial membrane prolipoproteins. Hydrolyzes -Xaa-Yaa-Zaa-|-(S,diacylglyceryl)Cys-, in which Xaa is hydrophobic (preferably Leu), and Yaa (Ala or Ser) and Zaa (Gly or Ala) have small, neutral side chains.. It participates in protein modification; lipoprotein biosynthesis (signal peptide cleavage). This protein specifically catalyzes the removal of signal peptides from prolipoproteins. The chain is Lipoprotein signal peptidase from Leptospira borgpetersenii serovar Hardjo-bovis (strain L550).